Here is a 1048-residue protein sequence, read N- to C-terminus: Probable inactive receptor kinase At5g10020 (1048 aa).

Positions 1–21 are cleaved as a signal peptide; sequence MSHFLTFCFLSLLLLLHGANA. LRR repeat units lie at residues 100–120, 124–146, 148–169, 172–194, 196–217, 224–246, 250–272, 273–294, 298–319, 320–342, 365–387, 389–411, 412–433, 436–457, 469–491, 493–516, 517–539, and 540–560; these read RLRNLSLSGNSFSGRVVPSLG, SLQHLDLSDNGFYGPIPGRISEL, SLNHLNLSSNKFEGGFPSGFRN, QLRSLDLHKNEIWGDVGEIFTEL, NVEFVDLSCNRFNGGLSLPMEN, TLRHLNLSHNALNGKFFSEESIG, NLEIVDLENNQINGELPHFGSQP, SLRILKLARNELFGLVPQELLQ, PLLELDLSRNGFTGSISEINSS, TLTMLNLSSNGLSGDLPSSFKSC, TPDVLDLSSNNLSGSLPNFTSAF, RLSVLSIRNNSVSGSLPSLWGDS, QFSVIDLSSNKFSGFIPVSFFT, SLRSLNLSRNNLEGPIPFRGSR, QMELLDLSTNSLTGMLPGDIGTM, KIKVLNLANNKLSGELPSDLNKLS, GLLFLDLSNNTFKGQIPNKLPSQ, and MVGFNVSYNDLSGIIPEDLRS. A helical transmembrane segment spans residues 602 to 622; that stretch reads IAIIVASVGAAIMILFVLFAY. The disordered stretch occupies residues 696-733; the sequence is EQGAPATSAPTNLLDDYPAASGRKSSSGGSPLSSSPRF. Residues 716–733 show a composition bias toward low complexity; sequence SGRKSSSGGSPLSSSPRF. A Phosphoserine modification is found at Ser-744. In terms of domain architecture, Protein kinase spans 768-1045; sequence RAPAEVLGRS…IRQVLDHLTS (278 aa). ATP contacts are provided by residues 774 to 782 and Lys-796; that span reads LGRSSHGTL.

It belongs to the protein kinase superfamily.

The protein localises to the membrane. In Arabidopsis thaliana (Mouse-ear cress), this protein is Probable inactive receptor kinase At5g10020.